Here is a 1169-residue protein sequence, read N- to C-terminus: Translation initiation factor IF-2 (1169 aa).

Disordered regions lie at residues 69 to 108 and 139 to 568; these read IKAK…PLLI and ALSK…LRAA. 2 stretches are compositionally biased toward basic and acidic residues: residues 71-83 and 92-102; these read AKNE…DNKN and HPEKLSKEGLN. A compositionally biased stretch (polar residues) spans 139 to 156; it reads ALSKNQNKTNTSVITTPN. Residues 157–171 show a composition bias toward basic and acidic residues; that stretch reads LKDKKNPSALQDKKP. A compositionally biased stretch (low complexity) spans 196–214; it reads NLANSNRNINANKINNSVN. Positions 231–248 are enriched in polar residues; the sequence is ADNNNFPKKNLNSPNVKS. Low complexity predominate over residues 265-281; that stretch reads NTNRPNSNSRQPSSNTQ. Composition is skewed to polar residues over residues 282 to 294, 412 to 432, and 439 to 455; these read ISAN…NRQG, MQLQ…NVNK, and NQKT…SPSP. The segment covering 472-486 has biased composition (basic and acidic residues); sequence GRTDWDDSAKLEALR. Residues 544–560 are compositionally biased toward basic residues; sequence KQFKKKKKETTRQRQKR. The tr-type G domain maps to 661 to 838; sequence KRPPVITVMG…EVEDLQANPE (178 aa). The tract at residues 670–677 is G1; it reads GHVDHGKT. 670 to 677 provides a ligand contact to GTP; it reads GHVDHGKT. Residues 695-699 form a G2 region; sequence GITQH. The tract at residues 720–723 is G3; that stretch reads DTPG. GTP-binding positions include 720–724 and 774–777; these read DTPGH and NKID. A G4 region spans residues 774 to 777; it reads NKID. Residues 810–812 form a G5 region; it reads SAI.

It belongs to the TRAFAC class translation factor GTPase superfamily. Classic translation factor GTPase family. IF-2 subfamily.

It localises to the cytoplasm. In terms of biological role, one of the essential components for the initiation of protein synthesis. Protects formylmethionyl-tRNA from spontaneous hydrolysis and promotes its binding to the 30S ribosomal subunits. Also involved in the hydrolysis of GTP during the formation of the 70S ribosomal complex. The polypeptide is Translation initiation factor IF-2 (Prochlorococcus marinus subsp. pastoris (strain CCMP1986 / NIES-2087 / MED4)).